The primary structure comprises 293 residues: Digeranylgeranylglyceryl phosphate synthase (293 aa).

Helical transmembrane passes span 26–46 (LMYGFGVVIGIYVSDPFFSDL), 50–70 (LLGYLTAVFLQASTFALNDYF), 107–127 (FVAAYLISPLAFIFAFAVSVL), 140–160 (FAGNVYIAFTMAAPFLFGSII), 215–235 (IASLFYLTAVSISPIPLFLLP), 237–257 (FLFDLKYAVPVSVTDVLLIYV), and 273–293 (YRKVTLVAMVLGLVGFFAGAF).

The protein belongs to the UbiA prenyltransferase family. DGGGP synthase subfamily. Mg(2+) is required as a cofactor.

It localises to the cell membrane. The enzyme catalyses sn-3-O-(geranylgeranyl)glycerol 1-phosphate + (2E,6E,10E)-geranylgeranyl diphosphate = 2,3-bis-O-(geranylgeranyl)-sn-glycerol 1-phosphate + diphosphate. It functions in the pathway membrane lipid metabolism; glycerophospholipid metabolism. Prenyltransferase that catalyzes the transfer of the geranylgeranyl moiety of geranylgeranyl diphosphate (GGPP) to the C2 hydroxyl of (S)-3-O-geranylgeranylglyceryl phosphate (GGGP). This reaction is the second ether-bond-formation step in the biosynthesis of archaeal membrane lipids. The protein is Digeranylgeranylglyceryl phosphate synthase of Archaeoglobus fulgidus (strain ATCC 49558 / DSM 4304 / JCM 9628 / NBRC 100126 / VC-16).